A 234-amino-acid chain; its full sequence is UPF0758 protein Smal_0281 (234 aa).

The 123-residue stretch at 103–225 (VGNNPAAVGR…PVSFAERGLL (123 aa)) folds into the MPN domain. 3 residues coordinate Zn(2+): histidine 174, histidine 176, and aspartate 187. The JAMM motif signature appears at 174–187 (HNHPSGDPEPSSAD).

This sequence belongs to the UPF0758 family.

The chain is UPF0758 protein Smal_0281 from Stenotrophomonas maltophilia (strain R551-3).